A 141-amino-acid polypeptide reads, in one-letter code: uncharacterized protein (141 aa).

A run of 3 helical transmembrane segments spans residues 32 to 52, 69 to 89, and 109 to 129; these read LIVL…TSII, IIAL…IAGF, and FTGY…PIAY.

It is found in the cell membrane. This is an uncharacterized protein from Methanocaldococcus jannaschii (strain ATCC 43067 / DSM 2661 / JAL-1 / JCM 10045 / NBRC 100440) (Methanococcus jannaschii).